Here is a 224-residue protein sequence, read N- to C-terminus: Phosphoribosylformylglycinamidine synthase subunit PurQ (224 aa).

Residues 2–224 form the Glutamine amidotransferase type-1 domain; sequence TVAIIRFGGS…DGQGVLEGFR (223 aa). The active-site Nucleophile is the Cys85. Residues His202 and Glu204 contribute to the active site. Positions 204 to 224 are disordered; sequence ERASLPDIGPTDGQGVLEGFR.

Part of the FGAM synthase complex composed of 1 PurL, 1 PurQ and 2 PurS subunits.

The protein resides in the cytoplasm. It catalyses the reaction N(2)-formyl-N(1)-(5-phospho-beta-D-ribosyl)glycinamide + L-glutamine + ATP + H2O = 2-formamido-N(1)-(5-O-phospho-beta-D-ribosyl)acetamidine + L-glutamate + ADP + phosphate + H(+). The enzyme catalyses L-glutamine + H2O = L-glutamate + NH4(+). The protein operates within purine metabolism; IMP biosynthesis via de novo pathway; 5-amino-1-(5-phospho-D-ribosyl)imidazole from N(2)-formyl-N(1)-(5-phospho-D-ribosyl)glycinamide: step 1/2. In terms of biological role, part of the phosphoribosylformylglycinamidine synthase complex involved in the purines biosynthetic pathway. Catalyzes the ATP-dependent conversion of formylglycinamide ribonucleotide (FGAR) and glutamine to yield formylglycinamidine ribonucleotide (FGAM) and glutamate. The FGAM synthase complex is composed of three subunits. PurQ produces an ammonia molecule by converting glutamine to glutamate. PurL transfers the ammonia molecule to FGAR to form FGAM in an ATP-dependent manner. PurS interacts with PurQ and PurL and is thought to assist in the transfer of the ammonia molecule from PurQ to PurL. The polypeptide is Phosphoribosylformylglycinamidine synthase subunit PurQ (Natronomonas pharaonis (strain ATCC 35678 / DSM 2160 / CIP 103997 / JCM 8858 / NBRC 14720 / NCIMB 2260 / Gabara) (Halobacterium pharaonis)).